The chain runs to 122 residues: Large ribosomal subunit protein uL14c (122 aa).

Belongs to the universal ribosomal protein uL14 family. Part of the 50S ribosomal subunit.

The protein localises to the plastid. It is found in the chloroplast. Its function is as follows. Binds to 23S rRNA. The protein is Large ribosomal subunit protein uL14c of Daucus carota (Wild carrot).